Reading from the N-terminus, the 314-residue chain is Serine/threonine-protein phosphatase CPPED1 (314 aa).

S2 is subject to Phosphoserine. The catalytic stretch occupies residues 47-250 (KAWSTGDCDN…KVVFSGHYHR (204 aa)). Residues D53, D90, N127, and H247 each coordinate a divalent metal cation. At S294 the chain carries Phosphoserine.

It belongs to the metallophosphoesterase superfamily. CPPED1 family. A divalent metal cation serves as cofactor. As to expression, expressed in subcutaneous adipose tissue.

Its subcellular location is the cytoplasm. The catalysed reaction is O-phospho-L-seryl-[protein] + H2O = L-seryl-[protein] + phosphate. It carries out the reaction O-phospho-L-threonyl-[protein] + H2O = L-threonyl-[protein] + phosphate. Protein phosphatase that dephosphorylates AKT family kinase specifically at 'Ser-473', blocking cell cycle progression and promoting cell apoptosis. May play an inhibitory role in glucose uptake by adipocytes. The protein is Serine/threonine-protein phosphatase CPPED1 (CPPED1) of Homo sapiens (Human).